The following is a 217-amino-acid chain: Protein-L-isoaspartate O-methyltransferase (217 aa).

S61 is a catalytic residue.

The protein belongs to the methyltransferase superfamily. L-isoaspartyl/D-aspartyl protein methyltransferase family.

The protein resides in the cytoplasm. The enzyme catalyses [protein]-L-isoaspartate + S-adenosyl-L-methionine = [protein]-L-isoaspartate alpha-methyl ester + S-adenosyl-L-homocysteine. Catalyzes the methyl esterification of L-isoaspartyl residues in peptides and proteins that result from spontaneous decomposition of normal L-aspartyl and L-asparaginyl residues. It plays a role in the repair and/or degradation of damaged proteins. This Brucella anthropi (strain ATCC 49188 / DSM 6882 / CCUG 24695 / JCM 21032 / LMG 3331 / NBRC 15819 / NCTC 12168 / Alc 37) (Ochrobactrum anthropi) protein is Protein-L-isoaspartate O-methyltransferase.